The following is a 930-amino-acid chain: Beta-mannosidase A (930 aa).

The first 21 residues, 1 to 21 (MHVKAETVLALLTPGLPSVVG), serve as a signal peptide directing secretion. N-linked (GlcNAc...) asparagine glycans are attached at residues asparagine 62, asparagine 246, asparagine 281, asparagine 315, and asparagine 346. Catalysis depends on glutamate 478, which acts as the Proton donor. Residues asparagine 536, asparagine 607, asparagine 630, asparagine 657, asparagine 737, asparagine 760, asparagine 782, asparagine 789, asparagine 797, asparagine 823, and asparagine 909 are each glycosylated (N-linked (GlcNAc...) asparagine).

This sequence belongs to the glycosyl hydrolase 2 family. Beta-mannosidase A subfamily. In terms of assembly, homodimer.

Its subcellular location is the secreted. The enzyme catalyses Hydrolysis of terminal, non-reducing beta-D-mannose residues in beta-D-mannosides.. Its pathway is glycan metabolism; N-glycan degradation. Its function is as follows. Exoglycosidase that cleaves the single beta-linked mannose residue from the non-reducing end of beta-mannosidic oligosaccharides of various complexity and length. Involved in the degradation of polymeric mannan and galactomannan. This chain is Beta-mannosidase A (mndA), found in Neosartorya fischeri (strain ATCC 1020 / DSM 3700 / CBS 544.65 / FGSC A1164 / JCM 1740 / NRRL 181 / WB 181) (Aspergillus fischerianus).